The sequence spans 442 residues: 5-methylthioadenosine/S-adenosylhomocysteine deaminase (442 aa).

Positions 70 and 72 each coordinate Zn(2+). Glu-99 and His-191 together coordinate substrate. Residue His-218 coordinates Zn(2+). Positions 221 and 306 each coordinate substrate. Asp-306 contributes to the Zn(2+) binding site.

Belongs to the metallo-dependent hydrolases superfamily. MTA/SAH deaminase family. It depends on Zn(2+) as a cofactor.

It carries out the reaction S-adenosyl-L-homocysteine + H2O + H(+) = S-inosyl-L-homocysteine + NH4(+). The enzyme catalyses S-methyl-5'-thioadenosine + H2O + H(+) = S-methyl-5'-thioinosine + NH4(+). Functionally, catalyzes the deamination of 5-methylthioadenosine and S-adenosyl-L-homocysteine into 5-methylthioinosine and S-inosyl-L-homocysteine, respectively. Is also able to deaminate adenosine. This Nitratidesulfovibrio vulgaris (strain ATCC 29579 / DSM 644 / CCUG 34227 / NCIMB 8303 / VKM B-1760 / Hildenborough) (Desulfovibrio vulgaris) protein is 5-methylthioadenosine/S-adenosylhomocysteine deaminase.